The primary structure comprises 297 residues: N-acetylneuraminate lyase (297 aa).

Aceneuramate contacts are provided by Ser47 and Thr48. The active-site Proton donor is the Tyr137. Catalysis depends on Lys165, which acts as the Schiff-base intermediate with substrate. Aceneuramate contacts are provided by Thr167, Gly189, Asp191, Glu192, and Ser208.

The protein belongs to the DapA family. NanA subfamily. As to quaternary structure, homotetramer.

It is found in the cytoplasm. It catalyses the reaction aceneuramate = aldehydo-N-acetyl-D-mannosamine + pyruvate. It functions in the pathway amino-sugar metabolism; N-acetylneuraminate degradation; D-fructose 6-phosphate from N-acetylneuraminate: step 1/5. In terms of biological role, catalyzes the reversible aldol cleavage of N-acetylneuraminic acid (sialic acid; Neu5Ac) to form pyruvate and N-acetylmannosamine (ManNAc) via a Schiff base intermediate. The polypeptide is N-acetylneuraminate lyase (Citrobacter koseri (strain ATCC BAA-895 / CDC 4225-83 / SGSC4696)).